The primary structure comprises 1405 residues: Protein crumbs homolog 1 (1405 aa).

A signal peptide spans 1-27 (MKLKRTAYLLFLYLSSSLLICIKNSFC). Topologically, residues 28 to 1339 (NKNNTRCLSG…RCELDLADDR (1312 aa)) are extracellular. An EGF-like 1; atypical domain is found at 30–67 (NNTRCLSGPCQNNSTCKHFPQDNNCCLDTANNLDKDCE). Cystine bridges form between C34/C45, C39/C54, C55/C66, C73/C84, C78/C95, C97/C106, C113/C124, C118/C133, C135/C144, C151/C162, C156/C171, C173/C182, C189/C200, C194/C209, C211/C220, C227/C238, C232/C247, C249/C258, C265/C276, C270/C285, C287/C297, C304/C315, C309/C324, C326/C335, C342/C353, C347/C382, C384/C393, C400/C411, C405/C420, C422/C437, C444/C455, C449/C468, and C470/C479. N-linked (GlcNAc...) asparagine glycosylation is present at N41. 2 EGF-like domains span residues 69 to 107 (LKDP…LNCE) and 109 to 145 (ATNS…RFCE). An EGF-like 4; calcium-binding domain is found at 147–183 (DHNECASSPCHNGAMCQDGINGYSCFCVPGYQGRHCD). The EGF-like 5; calcium-binding domain maps to 185–221 (EVDECVSDPCKNEAVCLNEIGRYTCVCPQEFSGVNCE). The EGF-like 6; calcium-binding domain maps to 223–259 (EIDECRSQPCLHGATCQDAPGGYSCDCAPGFLGEHCE). EGF-like domains lie at 261-298 (SVNE…MHCE), 300-336 (LIPL…ALCE), 338-394 (DINE…IHCE), 396-438 (DVDE…ENCS), and 440-480 (ILLG…PLCE). In terms of domain architecture, Laminin G-like 1 spans 482–669 (VTTLSFGSNG…GLSSNVKAGC (188 aa)). N-linked (GlcNAc...) asparagine glycosylation is found at N560 and N656. 4 cysteine pairs are disulfide-bonded: C641/C669, C675/C686, C680/C695, and C697/C706. Positions 671-707 (GKDWCESQPCQNRGRCINLWQGYQCECDRPYTGSNCL) constitute an EGF-like 12 domain. The 172-residue stretch at 713 to 884 (GRFGQDDSTG…PILVNVTQGC (172 aa)) folds into the Laminin G-like 2 domain. N-linked (GlcNAc...) asparagine glycans are attached at residues N756 and N879. Intrachain disulfides connect C850-C884, C890-C901, C895-C910, C912-C921, C927-C938, and C932-C947. EGF-like domains are found at residues 886–922 (GDNT…RACE) and 923–959 (QVQW…LSRE). Residues 950–1136 (NAVFSGLSRE…VSTNMVLTGC (187 aa)) enclose the Laminin G-like 3 domain. N-linked (GlcNAc...) asparagine glycans are attached at residues N967, N974, and N999. 16 disulfide bridges follow: C1095-C1136, C1142-C1153, C1147-C1162, C1164-C1173, C1180-C1190, C1185-C1199, C1201-C1210, C1217-C1228, C1222-C1237, C1239-C1248, C1258-C1273, C1267-C1282, C1284-C1293, C1300-C1311, C1305-C1320, and C1322-C1331. The region spanning 1138-1174 (PSNACHSSPCLHGGNCEDSYSSYRCACLSGWSGTHCE) is the EGF-like 15 domain. The region spanning 1176 to 1211 (NIDECFSSPCIHGNCSDGVAAYHCRCEPGYTGVNCE) is the EGF-like 16; calcium-binding domain. N-linked (GlcNAc...) asparagine glycosylation is present at N1189. EGF-like domains are found at residues 1213-1249 (DVDN…RFCR) and 1254-1294 (PSTV…EWCE). N-linked (GlcNAc...) asparagine glycosylation is found at N1242 and N1264. In terms of domain architecture, EGF-like 19; calcium-binding spans 1296–1332 (DINECASDPCINGGLCRDLVNRFLCICDVAFAGERCE). The chain crosses the membrane as a helical span at residues 1340-1360 (LLGIFTAVGSGTLALFFILLL). The Cytoplasmic portion of the chain corresponds to 1361–1405 (AGVASLIASNKRATQGTYSPSGQEKAGPRVEMWIRMPPPALERLI).

This sequence belongs to the Crumbs protein family. In terms of assembly, component of a complex composed of PALS1, CRB1 and EPB41L5. Within the complex, interacts (via intracellular domain) with PALS1 and EPB41L5 (via FERM domain). Forms a complex with MPP4 and PALS1. Interacts with MPDZ/MUPP1 and MPP4. Glycosylated. Expressed in the kidney, lung, stomach and testis. Expressed in the brain. Expressed in the retina of the eye. Expressed in the outer nuclear layer, photoreceptor layer and inner nuclear layer of the retina. Expressed in Mueller cell radial processes in the inner nuclear layer, in apical processes sclerad to the external limiting membrane, and in the subapical region, adjacent to the adherens junction of retinal photoreceptors. In the brain, expressed in the granular layer of the cerebellum, the hippocampal dentate gyrus, the olfactory bulbs, the subventricular region lining the telencephalic ventricles and the rostral migratory stream. As to expression, ubiquitously expressed.

It localises to the apical cell membrane. Its subcellular location is the secreted. The protein resides in the cell projection. The protein localises to the cilium. It is found in the photoreceptor outer segment. It localises to the photoreceptor inner segment. Its subcellular location is the cytoplasm. The protein resides in the cell junction. The protein localises to the focal adhesion. In terms of biological role, plays a role in photoreceptor morphogenesis in the retina. May maintain cell polarization and adhesion. May play a role in epidermal tissue morphogenesis. May function in cell attachment for stratified epithelial organization. The chain is Protein crumbs homolog 1 (Crb1) from Mus musculus (Mouse).